A 540-amino-acid polypeptide reads, in one-letter code: MSTEIQTELHQAVELRRNFAIISHPDAGKTTLTEKLLLYGGAIHEAGAVKARRAQRKATSDWMAMEQQRGISITSTVLQFEYQNCQINLLDTPGHQDFSEDTYRTLAAADNAVMLIDVAKGLEPQTRKLFEVCKLRGLPIFTFINKLDRPGREPLELLDEIEQELGLQTYAVNWPIGMGDRFKGVFDRNKQQIHLFERSAHGSKEARDTTVELGDPRIEELLEEDLYYQLKNDLELLEGVGPELDLDLVHQGKMTPVFFGSAMTNFGVELFLKYFLNYALKPGVHISSVGEVAPTYPEFSGFVFKLQANMDPKHRDRVAFIRVCTGKFEKDMTVNHARTGKIVRLSRPQKLFAQERESIDVAYPGDVIGLNNPGVFAIGDTIYTGQKLEYEGIPYFSPELFATLRNPNPSKFKQFQKGISELREEGAVQIMYSVDEAKRDPIMAAVGQLQFEVVQFRLQNEYGVETILELLPYSVARWVDGGWEALNKVGRIFNTTTVKDSMNRPVLLFRNEWNCQQLQGDHPELKLSAIAPVFSSQTVE.

Positions 14–283 constitute a tr-type G domain; it reads ELRRNFAIIS…YFLNYALKPG (270 aa). Residues 23-30, 91-95, and 145-148 contribute to the GTP site; these read SHPDAGKT, DTPGH, and NKLD.

It belongs to the TRAFAC class translation factor GTPase superfamily. Classic translation factor GTPase family. PrfC subfamily.

The protein localises to the cytoplasm. Increases the formation of ribosomal termination complexes and stimulates activities of RF-1 and RF-2. It binds guanine nucleotides and has strong preference for UGA stop codons. It may interact directly with the ribosome. The stimulation of RF-1 and RF-2 is significantly reduced by GTP and GDP, but not by GMP. The polypeptide is Peptide chain release factor 3 (Trichormus variabilis (strain ATCC 29413 / PCC 7937) (Anabaena variabilis)).